A 133-amino-acid chain; its full sequence is U-scoloptoxin(05)-Sa1a (133 aa).

Residues 1–24 (MPSLCIIALFGTLTFYTLIPSIHT) form the signal peptide.

This sequence belongs to the scoloptoxin-05 family. In terms of processing, contains 5 disulfide bonds. In terms of tissue distribution, expressed by the venom gland.

Its subcellular location is the secreted. The sequence is that of U-scoloptoxin(05)-Sa1a from Scolopendra alternans (Florida Keys giant centipede).